Here is a 114-residue protein sequence, read N- to C-terminus: Class I hydrophobin SC16 (114 aa).

The N-terminal stretch at 1–17 (MRFFATLVLALPALAMA) is a signal peptide. Intrachain disulfides connect Cys33–Cys93, Cys40–Cys87, Cys41–Cys74, and Cys94–Cys107. Asn42 carries N-linked (GlcNAc...) asparagine glycosylation.

Belongs to the fungal hydrophobin family. In terms of assembly, self-assembles to form functional amyloid fibrils called rodlets. Self-assembly into fibrillar rodlets occurs spontaneously at hydrophobic:hydrophilic interfaces and the rodlets further associate laterally to form amphipathic monolayers.

It localises to the secreted. The protein resides in the cell wall. Functionally, aerial growth, conidiation, and dispersal of filamentous fungi in the environment rely upon a capability of their secreting small amphipathic proteins called hydrophobins (HPBs) with low sequence identity. Class I can self-assemble into an outermost layer of rodlet bundles on aerial cell surfaces, conferring cellular hydrophobicity that supports fungal growth, development and dispersal; whereas Class II form highly ordered films at water-air interfaces through intermolecular interactions but contribute nothing to the rodlet structure. The chain is Class I hydrophobin SC16 from Schizophyllum commune (strain H4-8 / FGSC 9210) (Split gill fungus).